The chain runs to 959 residues: Probable LRR receptor-like serine/threonine-protein kinase At5g37450 (959 aa).

Positions 1-24 (MKEMMGVVGIILVVSSCCLSLLDA) are cleaved as a signal peptide. The Extracellular portion of the chain corresponds to 25 to 565 (QEITHPTDVS…SGMSIGVSVG (541 aa)). 4 N-linked (GlcNAc...) asparagine glycosylation sites follow: asparagine 62, asparagine 88, asparagine 102, and asparagine 123. LRR repeat units follow at residues 79–100 (VKEL…LGLL), 101–124 (SNLT…LGNL), 125–148 (THLI…LGSL), 149–172 (SNLL…LANL), 173–198 (KKLK…TLTN), 200–220 (LHFL…LAQM), 221–244 (PSLR…SYGS), 246–268 (PNLV…LSKS), and 269–292 (LVLY…KFSA). N-linked (GlcNAc...) asparagine glycosylation is present at asparagine 182. 6 N-linked (GlcNAc...) asparagine glycosylation sites follow: asparagine 293, asparagine 311, asparagine 327, asparagine 358, asparagine 369, and asparagine 510. 3 LRR repeats span residues 294–314 (ITTI…NFSG), 315–338 (LPRL…IWEN), and 341–366 (LKAE…LLNP). Residues 566 to 586 (IIIGAIAFFLVLSSLALVFFI) form a helical membrane-spanning segment. At 587–959 (KRSKRKRKTR…SGVIPSIAPR (373 aa)) the chain is on the cytoplasmic side. The Protein kinase domain maps to 631–906 (FSDLSQIGRG…RELENIYGLI (276 aa)). ATP-binding positions include 637 to 645 (IGRGGYGKV) and lysine 659. Catalysis depends on aspartate 755, which acts as the Proton acceptor.

The protein belongs to the protein kinase superfamily. Ser/Thr protein kinase family.

The protein resides in the membrane. The enzyme catalyses L-seryl-[protein] + ATP = O-phospho-L-seryl-[protein] + ADP + H(+). It carries out the reaction L-threonyl-[protein] + ATP = O-phospho-L-threonyl-[protein] + ADP + H(+). This is Probable LRR receptor-like serine/threonine-protein kinase At5g37450 from Arabidopsis thaliana (Mouse-ear cress).